The following is a 238-amino-acid chain: Type III pantothenate kinase (238 aa).

Position 7-14 (7-14 (DAGNSGLK)) interacts with ATP. Substrate is bound by residues tyrosine 88 and 95-98 (GVDR). Residue aspartate 97 is the Proton acceptor of the active site. Aspartate 117 is a K(+) binding site. Residue threonine 120 coordinates ATP. A substrate-binding site is contributed by threonine 172.

The protein belongs to the type III pantothenate kinase family. Homodimer. Requires NH4(+) as cofactor. The cofactor is K(+).

It localises to the cytoplasm. The catalysed reaction is (R)-pantothenate + ATP = (R)-4'-phosphopantothenate + ADP + H(+). Its pathway is cofactor biosynthesis; coenzyme A biosynthesis; CoA from (R)-pantothenate: step 1/5. In terms of biological role, catalyzes the phosphorylation of pantothenate (Pan), the first step in CoA biosynthesis. This chain is Type III pantothenate kinase, found in Hahella chejuensis (strain KCTC 2396).